Reading from the N-terminus, the 245-residue chain is 1-(5-phosphoribosyl)-5-[(5-phosphoribosylamino)methylideneamino] imidazole-4-carboxamide isomerase (245 aa).

D8 (proton acceptor) is an active-site residue. The active-site Proton donor is D129.

The protein belongs to the HisA/HisF family.

The protein resides in the cytoplasm. It catalyses the reaction 1-(5-phospho-beta-D-ribosyl)-5-[(5-phospho-beta-D-ribosylamino)methylideneamino]imidazole-4-carboxamide = 5-[(5-phospho-1-deoxy-D-ribulos-1-ylimino)methylamino]-1-(5-phospho-beta-D-ribosyl)imidazole-4-carboxamide. It participates in amino-acid biosynthesis; L-histidine biosynthesis; L-histidine from 5-phospho-alpha-D-ribose 1-diphosphate: step 4/9. The chain is 1-(5-phosphoribosyl)-5-[(5-phosphoribosylamino)methylideneamino] imidazole-4-carboxamide isomerase from Heliobacterium modesticaldum (strain ATCC 51547 / Ice1).